Reading from the N-terminus, the 280-residue chain is Octanoyl-[GcvH]:protein N-octanoyltransferase (280 aa).

The BPL/LPL catalytic domain maps to 40–245; that stretch reads QERGAVLRAW…VLSTVSLLQN (206 aa). Cysteine 144 (acyl-thioester intermediate) is an active-site residue.

Belongs to the octanoyltransferase LipL family.

The catalysed reaction is N(6)-octanoyl-L-lysyl-[glycine-cleavage complex H protein] + L-lysyl-[lipoyl-carrier protein] = N(6)-octanoyl-L-lysyl-[lipoyl-carrier protein] + L-lysyl-[glycine-cleavage complex H protein]. The protein operates within protein modification; protein lipoylation via endogenous pathway; protein N(6)-(lipoyl)lysine from octanoyl-[acyl-carrier-protein]. In terms of biological role, catalyzes the amidotransfer (transamidation) of the octanoyl moiety from octanoyl-GcvH to the lipoyl domain of the E2 subunit of lipoate-dependent enzymes. The chain is Octanoyl-[GcvH]:protein N-octanoyltransferase from Exiguobacterium sp. (strain ATCC BAA-1283 / AT1b).